Here is a 386-residue protein sequence, read N- to C-terminus: ADP,ATP carrier protein 1, mitochondrial (386 aa).

Residues 1-76 (MDQVQHPSVM…PSTASAICVQ (76 aa)) constitute a mitochondrion transit peptide. Solcar repeat units follow at residues 84–177 (SSFA…FKRL), 189–281 (KWFA…LKPV), and 289–375 (DSFF…LQLI). A run of 5 helical transmembrane segments spans residues 86–113 (FAIDFLMGGVSAAVSKTAAAPIERVKLL), 154–178 (TANVIRYFPTQALNFAFKDYFKRLF), 187–207 (YWKWFAGNLASGGAAGASSLL), 257–278 (FNISCVGIIVYRGLYFGMYDSL), and 292–312 (FASFVLGWLITNGAALASYPI). The ADP site is built by Arg159 and Lys171. Arg316 provides a ligand contact to ADP. Positions 316 to 321 (RRRMMM) are important for transport activity. A Nucleotide carrier signature motif motif is present at residues 316–321 (RRRMMM). A helical transmembrane segment spans residues 352–372 (AGSNILRAIAGAGVLAGYDKL).

Belongs to the mitochondrial carrier (TC 2.A.29) family. Monomer.

It is found in the mitochondrion inner membrane. It catalyses the reaction ADP(in) + ATP(out) = ADP(out) + ATP(in). With respect to regulation, the matrix-open state (m-state) is inhibited by the membrane-permeable bongkrekic acid (BKA). The cytoplasmic-open state (c-state) is inhibited by the membrane-impermeable toxic inhibitor carboxyatractyloside (CATR). Functionally, ADP:ATP antiporter that mediates import of ADP into the mitochondrial matrix for ATP synthesis, and export of ATP out to fuel the cell. Cycles between the cytoplasmic-open state (c-state) and the matrix-open state (m-state): operates by the alternating access mechanism with a single substrate-binding site intermittently exposed to either the cytosolic (c-state) or matrix (m-state) side of the inner mitochondrial membrane. The sequence is that of ADP,ATP carrier protein 1, mitochondrial (ANT1) from Gossypium hirsutum (Upland cotton).